The chain runs to 159 residues: Phosphopantetheine adenylyltransferase (159 aa).

Residue Thr-9 coordinates substrate. ATP is bound by residues 9–10 (TF) and His-17. Positions 41, 73, and 87 each coordinate substrate. ATP contacts are provided by residues 88–90 (GLR), Glu-98, and 123–129 (YAFLSST).

The protein belongs to the bacterial CoaD family. Homohexamer. Mg(2+) serves as cofactor.

It localises to the cytoplasm. The enzyme catalyses (R)-4'-phosphopantetheine + ATP + H(+) = 3'-dephospho-CoA + diphosphate. It participates in cofactor biosynthesis; coenzyme A biosynthesis; CoA from (R)-pantothenate: step 4/5. Its function is as follows. Reversibly transfers an adenylyl group from ATP to 4'-phosphopantetheine, yielding dephospho-CoA (dPCoA) and pyrophosphate. The protein is Phosphopantetheine adenylyltransferase of Vibrio campbellii (strain ATCC BAA-1116).